Here is a 377-residue protein sequence, read N- to C-terminus: Succinyl-diaminopimelate desuccinylase (377 aa).

His71 serves as a coordination point for Zn(2+). Residue Asp73 is part of the active site. Asp102 contacts Zn(2+). Catalysis depends on Glu132, which acts as the Proton acceptor. Zn(2+) contacts are provided by Glu133, Glu161, and His346.

Belongs to the peptidase M20A family. DapE subfamily. As to quaternary structure, homodimer. Requires Zn(2+) as cofactor. Co(2+) serves as cofactor.

It catalyses the reaction N-succinyl-(2S,6S)-2,6-diaminopimelate + H2O = (2S,6S)-2,6-diaminopimelate + succinate. It participates in amino-acid biosynthesis; L-lysine biosynthesis via DAP pathway; LL-2,6-diaminopimelate from (S)-tetrahydrodipicolinate (succinylase route): step 3/3. In terms of biological role, catalyzes the hydrolysis of N-succinyl-L,L-diaminopimelic acid (SDAP), forming succinate and LL-2,6-diaminopimelate (DAP), an intermediate involved in the bacterial biosynthesis of lysine and meso-diaminopimelic acid, an essential component of bacterial cell walls. In Rhizorhabdus wittichii (strain DSM 6014 / CCUG 31198 / JCM 15750 / NBRC 105917 / EY 4224 / RW1) (Sphingomonas wittichii), this protein is Succinyl-diaminopimelate desuccinylase.